Here is a 458-residue protein sequence, read N- to C-terminus: Argininosuccinate lyase (458 aa).

Belongs to the lyase 1 family. Argininosuccinate lyase subfamily.

The protein localises to the cytoplasm. It carries out the reaction 2-(N(omega)-L-arginino)succinate = fumarate + L-arginine. It participates in amino-acid biosynthesis; L-arginine biosynthesis; L-arginine from L-ornithine and carbamoyl phosphate: step 3/3. The protein is Argininosuccinate lyase of Glaesserella parasuis serovar 5 (strain SH0165) (Haemophilus parasuis).